We begin with the raw amino-acid sequence, 131 residues long: Phosphoribosyl-AMP cyclohydrolase (131 aa).

Position 74 (aspartate 74) interacts with Mg(2+). Residue cysteine 75 coordinates Zn(2+). Mg(2+)-binding residues include aspartate 76 and aspartate 78. Zn(2+)-binding residues include cysteine 91 and cysteine 98.

This sequence belongs to the PRA-CH family. As to quaternary structure, homodimer. Requires Mg(2+) as cofactor. It depends on Zn(2+) as a cofactor.

It localises to the cytoplasm. It catalyses the reaction 1-(5-phospho-beta-D-ribosyl)-5'-AMP + H2O = 1-(5-phospho-beta-D-ribosyl)-5-[(5-phospho-beta-D-ribosylamino)methylideneamino]imidazole-4-carboxamide. It functions in the pathway amino-acid biosynthesis; L-histidine biosynthesis; L-histidine from 5-phospho-alpha-D-ribose 1-diphosphate: step 3/9. Catalyzes the hydrolysis of the adenine ring of phosphoribosyl-AMP. The polypeptide is Phosphoribosyl-AMP cyclohydrolase (Bradyrhizobium sp. (strain BTAi1 / ATCC BAA-1182)).